An 82-amino-acid chain; its full sequence is Capsid protein G8P (82 aa).

A signal peptide spans 1 to 29 (MRVLSTVLAAKNKIALGAATMLVSAGSFA). The Periplasmic segment spans residues 30–54 (AEPNAATNYATEAMDSLKTQAIDLI). The helical transmembrane segment at 55-74 (SQTWPVVTTVVVAGLVIRLF) threads the bilayer. At 75–82 (KKFSSKAV) the chain is on the cytoplasmic side.

It belongs to the inovirus capsid protein family. As to quaternary structure, homomultimerizes. There are several thousands of this protein in the phage capsid.

It is found in the virion. It localises to the host membrane. Its function is as follows. Self assembles to form a helical capsid wrapping up the viral genomic DNA. The capsid displays a filamentous structure with a length of 760-1950 nm and a width of 6-8 nm. The virion assembly and budding take place at the host inner membrane. The polypeptide is Capsid protein G8P (VIII) (Salmonella phage IKe (Bacteriophage IKe)).